Consider the following 544-residue polypeptide: Chaperonin GroEL (544 aa).

Residues threonine 29–proline 32, lysine 50, aspartate 86–threonine 90, glycine 414, and aspartate 495 contribute to the ATP site.

It belongs to the chaperonin (HSP60) family. As to quaternary structure, forms a cylinder of 14 subunits composed of two heptameric rings stacked back-to-back. Interacts with the co-chaperonin GroES.

It is found in the cytoplasm. The catalysed reaction is ATP + H2O + a folded polypeptide = ADP + phosphate + an unfolded polypeptide.. Together with its co-chaperonin GroES, plays an essential role in assisting protein folding. The GroEL-GroES system forms a nano-cage that allows encapsulation of the non-native substrate proteins and provides a physical environment optimized to promote and accelerate protein folding. The polypeptide is Chaperonin GroEL (Treponema pallidum subsp. pallidum (strain SS14)).